A 206-amino-acid chain; its full sequence is Superoxide dismutase [Mn] (206 aa).

Positions 27, 82, 168, and 172 each coordinate Mn(2+).

This sequence belongs to the iron/manganese superoxide dismutase family. Homodimer. Mn(2+) is required as a cofactor.

The enzyme catalyses 2 superoxide + 2 H(+) = H2O2 + O2. Its function is as follows. Destroys superoxide anion radicals which are normally produced within the cells and which are toxic to biological systems. This is Superoxide dismutase [Mn] (sodA) from Escherichia coli (strain K12).